The primary structure comprises 323 residues: Beta-ketoacyl-[acyl-carrier-protein] synthase III (323 aa).

Residues cysteine 114 and histidine 250 contribute to the active site. The tract at residues glutamine 251–arginine 255 is ACP-binding. Asparagine 280 is a catalytic residue.

It belongs to the thiolase-like superfamily. FabH family. In terms of assembly, homodimer.

The protein resides in the cytoplasm. The catalysed reaction is malonyl-[ACP] + acetyl-CoA + H(+) = 3-oxobutanoyl-[ACP] + CO2 + CoA. It functions in the pathway lipid metabolism; fatty acid biosynthesis. In terms of biological role, catalyzes the condensation reaction of fatty acid synthesis by the addition to an acyl acceptor of two carbons from malonyl-ACP. Catalyzes the first condensation reaction which initiates fatty acid synthesis and may therefore play a role in governing the total rate of fatty acid production. Possesses both acetoacetyl-ACP synthase and acetyl transacylase activities. Its substrate specificity determines the biosynthesis of branched-chain and/or straight-chain of fatty acids. The chain is Beta-ketoacyl-[acyl-carrier-protein] synthase III from Rhodospirillum centenum (strain ATCC 51521 / SW).